The primary structure comprises 196 residues: Oocyte zinc finger protein XlCOF26 (196 aa).

C2H2-type zinc fingers lie at residues 6-28, 34-56, 62-84, 90-112, 118-140, 146-168, and 174-196; these read YSCT…QKNH, FTCT…QRIH, FTCT…HKIH, FTCP…QRTH, FTCT…QSTH, and FTCT…QMTH.

This sequence belongs to the krueppel C2H2-type zinc-finger protein family.

It localises to the nucleus. Its function is as follows. May be involved in transcriptional regulation. The polypeptide is Oocyte zinc finger protein XlCOF26 (Xenopus laevis (African clawed frog)).